A 616-amino-acid polypeptide reads, in one-letter code: Protein LNK1 (616 aa).

Disordered regions lie at residues 72–112 (GKNP…HGFN), 361–398 (ESKS…GPTV), 410–434 (ANLL…KTDS), and 567–616 (SSLS…SDNN). A compositionally biased stretch (polar residues) spans 371–395 (KPSPSSASNESYTSNHAQSIESLQG). Positions 567-577 (SSLSSDNNVLS) are enriched in low complexity. Residues 594-608 (RIEKQEETTELRPEA) are compositionally biased toward basic and acidic residues.

Interacts with CCA1, LHY, REV4 and REV8, but not with PRR7 or PRR9. In terms of tissue distribution, expressed in roots, stems, leaves, seedlings, cotyledons, inflorescences and siliques. Highest expression in root tips, young leaves and vasculatur tissues.

It is found in the nucleus. Functionally, transcriptional coactivator necessary for expression of the clock genes PRR5 and TOC1. Antagonizes REV8 function in the regulation of anthocyanin accumulation. Involved in red light input to the clock. Activates clock-controlled genes with afternoon peak. Mediates light inhibition of hypocotyl elongation. This chain is Protein LNK1, found in Arabidopsis thaliana (Mouse-ear cress).